We begin with the raw amino-acid sequence, 153 residues long: Transthyretin (153 aa).

A signal peptide spans 1–19 (MASFKSFLLLALLAIVSEA). C34 carries the sulfocysteine modification. L-thyroxine-binding residues include K39 and E78. N81 carries N-linked (GlcNAc...) asparagine glycosylation. L-thyroxine is bound at residue S141.

This sequence belongs to the transthyretin family. In terms of assembly, homotetramer. Dimer of dimers. In the homotetramer, subunits assemble around a central channel that can accommodate two ligand molecules. Interacts with rbp4. Post-translationally, sulfonation of the reactive cysteine Cys-34 enhances the stability of the native conformation of TTR, avoiding misassembly of the protein leading to amyloid formation. As to expression, detected in plasma (at protein level). Expressed during metamorphosis in tadpole liver, but not in tadpole brain nor adult liver. Between 1.5 and 3 days of development, also expressed in the mesoderm of the kidney.

The protein resides in the secreted. Functionally, thyroid hormone-binding protein, with a much higher binding affinity for triiodothyronine (T3) than for thyroxine (T4). Probably transports triiodothyronine from the bloodstream to the brain. The chain is Transthyretin (ttr) from Xenopus laevis (African clawed frog).